Consider the following 206-residue polypeptide: Proteasome subunit beta 2 (206 aa).

The propeptide at 1 to 10 is removed in mature form; by autocatalysis; it reads MLHLKEKLKG. The Nucleophile role is filled by T11.

It belongs to the peptidase T1B family. In terms of assembly, the 20S proteasome core is composed of 14 alpha and 14 beta subunits that assemble into four stacked heptameric rings, resulting in a barrel-shaped structure. The two inner rings, each composed of seven catalytic beta subunits, are sandwiched by two outer rings, each composed of seven alpha subunits. The catalytic chamber with the active sites is on the inside of the barrel. Has a gated structure, the ends of the cylinder being occluded by the N-termini of the alpha-subunits. Is capped at one or both ends by the proteasome regulatory ATPase, PAN.

The protein localises to the cytoplasm. It carries out the reaction Cleavage of peptide bonds with very broad specificity.. Its activity is regulated as follows. The formation of the proteasomal ATPase PAN-20S proteasome complex, via the docking of the C-termini of PAN into the intersubunit pockets in the alpha-rings, triggers opening of the gate for substrate entry. Interconversion between the open-gate and close-gate conformations leads to a dynamic regulation of the 20S proteasome proteolysis activity. Functionally, component of the proteasome core, a large protease complex with broad specificity involved in protein degradation. This chain is Proteasome subunit beta 2, found in Pyrococcus furiosus (strain ATCC 43587 / DSM 3638 / JCM 8422 / Vc1).